The primary structure comprises 335 residues: Phosphate acyltransferase (335 aa).

This sequence belongs to the PlsX family. In terms of assembly, homodimer. Probably interacts with PlsY.

It localises to the cytoplasm. The enzyme catalyses a fatty acyl-[ACP] + phosphate = an acyl phosphate + holo-[ACP]. It participates in lipid metabolism; phospholipid metabolism. In terms of biological role, catalyzes the reversible formation of acyl-phosphate (acyl-PO(4)) from acyl-[acyl-carrier-protein] (acyl-ACP). This enzyme utilizes acyl-ACP as fatty acyl donor, but not acyl-CoA. The polypeptide is Phosphate acyltransferase (Streptococcus equi subsp. zooepidemicus (strain H70)).